Consider the following 458-residue polypeptide: UDP-N-acetylmuramate--L-alanine ligase (458 aa).

118–124 (GTHGKTT) contributes to the ATP binding site.

The protein belongs to the MurCDEF family.

The protein resides in the cytoplasm. The enzyme catalyses UDP-N-acetyl-alpha-D-muramate + L-alanine + ATP = UDP-N-acetyl-alpha-D-muramoyl-L-alanine + ADP + phosphate + H(+). Its pathway is cell wall biogenesis; peptidoglycan biosynthesis. Its function is as follows. Cell wall formation. The chain is UDP-N-acetylmuramate--L-alanine ligase from Clostridium novyi (strain NT).